Here is a 234-residue protein sequence, read N- to C-terminus: N-acetyl-alpha-D-glucosaminyl L-malate deacetylase 1 (234 aa).

His-12, Asp-15, and His-113 together coordinate Zn(2+).

This sequence belongs to the PIGL family. As to quaternary structure, homohexamer. Trimer of dimers. It depends on Zn(2+) as a cofactor.

It carries out the reaction (S)-malyl N-acetyl-alpha-D-glucosaminide + H2O = (S)-malyl alpha-D-glucosaminide + acetate. In terms of biological role, involved in bacillithiol (BSH) biosynthesis. Catalyzes the second step of the pathway, the deacetylation of N-acetylglucosaminylmalate (GlcNAc-Mal) to glucosamine malate (GlcN-Mal). This is N-acetyl-alpha-D-glucosaminyl L-malate deacetylase 1 from Bacillus cereus (strain ATCC 14579 / DSM 31 / CCUG 7414 / JCM 2152 / NBRC 15305 / NCIMB 9373 / NCTC 2599 / NRRL B-3711).